Consider the following 350-residue polypeptide: Selenide, water dikinase (350 aa).

Residue Cys-17 is part of the active site. ATP contacts are provided by residues Lys-20 and 48-50; that span reads LFD. Asp-51 contacts Mg(2+). ATP is bound by residues Asp-68, Asp-91, and 139–141; that span reads GHS. Asp-91 serves as a coordination point for Mg(2+). Asp-229 provides a ligand contact to Mg(2+).

It belongs to the selenophosphate synthase 1 family. Class I subfamily. In terms of assembly, homodimer. The cofactor is Mg(2+).

It catalyses the reaction hydrogenselenide + ATP + H2O = selenophosphate + AMP + phosphate + 2 H(+). Its function is as follows. Synthesizes selenophosphate from selenide and ATP. In Bdellovibrio bacteriovorus (strain ATCC 15356 / DSM 50701 / NCIMB 9529 / HD100), this protein is Selenide, water dikinase.